A 2049-amino-acid polypeptide reads, in one-letter code: Polyunsaturated fatty acid synthase subunit B (2049 aa).

Ketosynthase family 3 (KS3) domains follow at residues 15–442 (EKRI…VFEE) and 468–908 (NMRI…LLSD). Catalysis depends on for beta-ketoacyl synthase 1 activity residues cysteine 196, histidine 333, and histidine 368. Residues 467–984 (NNMRIAITGM…LGETLAQEAD (518 aa)) are chain length factor (CLF) domain. An acyltransferase (AT) domain region spans residues 1044–1377 (RVAFMYGEGR…QRSHVTGAMD (334 aa)). Positions 1500-1531 (NKDNQPAVAPAATAAPTPKPKPAASSGKPVPS) are disordered. Low complexity predominate over residues 1505–1531 (PAVAPAATAAPTPKPKPAASSGKPVPS). An enoyl reductase (ER) domain region spans residues 1579–1887 (SRAFMKTYGV…SRANKLYELF (309 aa)).

As to quaternary structure, component of the polyunsaturated fatty acid synthase complex composed of at least ORF-A, ORF-B and ORF-C.

Its pathway is lipid metabolism; fatty acid biosynthesis. Functionally, poliketide synthase-like protein; part of the polyunsaturated fatty acid synthase composed of the 3 PKS-like subunits A, B and C. While the saturated fatty acids (SFAs) in Thraustochytrium are produced by the conventional fatty acid synthase (FAS) pathway, polyunsaturated fatty acids (PUFAs) including docosahexeanoic acid (DHA) and docosapentaenoic acid (DPA) are synthesized via an anaerobical PKS pathway. PUFA synthase assimilates fatty acyl-CoA, the product of FAS, as the starter unit to synthesize DPA, and this starter unit may be butyryl-CoA, hexanoyl-CoA, or octanoyl-CoA. DPA and DHA biosynthesis seem to differ by the reduction at the N-3 position by PUFA synthase, not the extension of carbon chain. In DHA biosynthesis, PUFA synthase extends the fatty acyl chain from the methyl toward the carboxyl end, and the double bond is formed when the carbon chain is growing, instead of afterward. Therefore, PUFA synthase is unable to transform DPA to DHA, suggesting that DPA is not the precursor of DHA. Moreover, DPA molecule is partly extended by FAS KS domain, so DPA biosynthesis is less dependent on PUFA synthase KS domain than DHA. This Thraustochytrium sp. (strain ATCC 26185 / S-3) protein is Polyunsaturated fatty acid synthase subunit B.